A 129-amino-acid chain; its full sequence is Small ribosomal subunit protein uS11 (129 aa).

It belongs to the universal ribosomal protein uS11 family. In terms of assembly, part of the 30S ribosomal subunit. Interacts with proteins S7 and S18. Binds to IF-3.

Its function is as follows. Located on the platform of the 30S subunit, it bridges several disparate RNA helices of the 16S rRNA. Forms part of the Shine-Dalgarno cleft in the 70S ribosome. The sequence is that of Small ribosomal subunit protein uS11 from Rhizobium etli (strain CIAT 652).